The sequence spans 555 residues: GMP synthase [glutamine-hydrolyzing] (555 aa).

The Glutamine amidotransferase type-1 domain maps to 8 to 234 (KILVLNFGSQ…AYNICKCKKQ (227 aa)). Cys89 acts as the Nucleophile; for GATase activity in catalysis. L-glutamine is bound by residues Gln93, Asn169, Asp172, and His208. Catalysis depends on for GATase activity residues His208 and Glu210. In terms of domain architecture, GMPS ATP-PPase spans 235-430 (FDPIRYHELE…LNLPEEITNR (196 aa)). Position 262-268 (262-268 (SGGIDST)) interacts with ATP. The XMP site is built by Arg336, Gln476, Lys547, Ile552, and Glu553.

Homodimer (via the GMPS ATP-PPase domain). Mg(2+) is required as a cofactor.

It catalyses the reaction XMP + L-glutamine + ATP + H2O = GMP + L-glutamate + AMP + diphosphate + 2 H(+). Its pathway is purine metabolism; GMP biosynthesis; GMP from XMP (L-Gln route): step 1/1. With respect to regulation, the GATase domain is allosterically activated by the binding of substrates, ATP and XMP, to the ATPPase domain, thus ensuring that glutamine hydrolysis occurs only when the ATPPase domain is primed to receive ammonia. Inhibited by Na(+). Inhibited by the reaction product GMP. Functionally, catalyzes the conversion of xanthine monophosphate (XMP) to GMP in the presence of glutamine and ATP through an adenyl-XMP intermediate, which is the final step of de novo synthesis of GMP. The conversion of XMP to GMP involves the coordinated action of the glutamine amidotransferase (GATase) domain that catalyzes the hydrolysis of the amide side chain of glutamine producing ammonia and the ATP pyrophosphatase (ATPPase) domain that catalyzes the synthesis of adenyl-XMP intermediate from ATP. The ammonia produced by the GATase domain is tunnelled to the ATP-PPase domain where it attacks the adenyl-XMP intermediate generating GMP. The polypeptide is GMP synthase [glutamine-hydrolyzing] (Plasmodium falciparum (isolate 3D7)).